A 411-amino-acid polypeptide reads, in one-letter code: Histidine--tRNA ligase (411 aa).

The protein belongs to the class-II aminoacyl-tRNA synthetase family. Homodimer.

It is found in the cytoplasm. It catalyses the reaction tRNA(His) + L-histidine + ATP = L-histidyl-tRNA(His) + AMP + diphosphate + H(+). The chain is Histidine--tRNA ligase from Dictyoglomus turgidum (strain DSM 6724 / Z-1310).